The primary structure comprises 1212 residues: Solute carrier family 12 member 2 (1212 aa).

N-acetylmethionine is present on M1. The Cytoplasmic portion of the chain corresponds to M1–G286. Disordered regions lie at residues G36–F81, G112–R138, and S150–S193. Phosphoserine is present on residues S77 and S79. The RFXV motif 1 motif lies at R80–V83. A compositionally biased stretch (basic and acidic residues) spans E127–G137. The RFXV motif 2 motif lies at R138–V141. Residues S150–A160 show a composition bias toward low complexity. Phosphothreonine; by OXSR1 and STK39 is present on residues T203, T207, and T212. Phosphothreonine occurs at positions 217 and 230. S242 bears the Phosphoserine mark. Phosphothreonine is present on T266. The discontinuously helical transmembrane segment at W287–G316 threads the bilayer. L297 contacts Na(+). 2 residues coordinate K(+): N298 and I299. W300 lines the Na(+) pocket. Chloride-binding residues include G301, V302, and M303. The chain crosses the membrane as a helical span at residues I317–L336. The Cytoplasmic portion of the chain corresponds to S337–A367. A helical membrane pass occupies residues I368–L395. Chloride is bound at residue F372. Y383 is a K(+) binding site. Residues K396–E405 are Extracellular-facing. Residues I406–E429 traverse the membrane as a helical segment. The Cytoplasmic segment spans residues W430 to A432. The helical transmembrane segment at K433 to F454 threads the bilayer. The Extracellular portion of the chain corresponds to I455 to T486. The chain crosses the membrane as a discontinuously helical span at residues F487 to G504. The K(+) site is built by P496, A497, and T499. Positions 496 and 497 each coordinate chloride. Residues G500 and I501 each contribute to the chloride site. The Cytoplasmic portion of the chain corresponds to A505–P519. The chain crosses the membrane as a helical span at residues K520–G541. The Extracellular portion of the chain corresponds to S542–G598. Residues N553 and N562 are each glycosylated (N-linked (GlcNAc...) asparagine). Cystine bridges form between C563–C568 and C577–C582. A helical transmembrane segment spans residues F599–P623. Residues A610, S613, and S614 each coordinate Na(+). Over K624 to P651 the chain is Cytoplasmic. Helical transmembrane passes span L652–N672 and V673–F691. Residues F682 and Y686 each contribute to the chloride site. Over S692–W714 the chain is Cytoplasmic. 2 helical membrane-spanning segments follow: residues I715–W732 and W733–L745. The Cytoplasmic segment spans residues Y746–S1212. Residues S761–S778 are scissor helix. A phosphoserine mark is found at S940 and S944. Positions L962–E978 are enriched in basic and acidic residues. The interval L962–L989 is disordered. S994 bears the Phosphoserine mark.

It belongs to the SLC12A transporter family. Homodimer; adopts a domain-swap conformation at the scissor helices connecting the transmembrane domain and C-terminal domain. Phosphorylated at Thr-203, Thr-207 and Thr-212 by OXSR1/OSR1 and STK39/SPAK downstream of WNK kinases (WNK1, WNK2, WNK3 or WNK4), promoting its activity. In terms of tissue distribution, expressed in many tissues.

The protein localises to the basolateral cell membrane. The catalysed reaction is K(+)(out) + 2 chloride(out) + Na(+)(out) = K(+)(in) + 2 chloride(in) + Na(+)(in). With respect to regulation, activated following phosphorylation by OXSR1/OSR1 and STK39/SPAK downstream of WNK kinases (WNK1, WNK2, WNK3 or WNK4). Inhibited by bumetanide. Inhibited by furosemide. Its function is as follows. Cation-chloride cotransporter which mediates the electroneutral transport of chloride, potassium and/or sodium ions across the membrane. Plays a vital role in the regulation of ionic balance and cell volume. The sequence is that of Solute carrier family 12 member 2 (SLC12A2) from Homo sapiens (Human).